The chain runs to 143 residues: Nucleoside diphosphate kinase (143 aa).

ATP contacts are provided by K11, F59, R87, T93, R104, and N114. H117 (pros-phosphohistidine intermediate) is an active-site residue.

Belongs to the NDK family. Homotetramer. Requires Mg(2+) as cofactor.

The protein resides in the cytoplasm. The catalysed reaction is a 2'-deoxyribonucleoside 5'-diphosphate + ATP = a 2'-deoxyribonucleoside 5'-triphosphate + ADP. The enzyme catalyses a ribonucleoside 5'-diphosphate + ATP = a ribonucleoside 5'-triphosphate + ADP. In terms of biological role, major role in the synthesis of nucleoside triphosphates other than ATP. The ATP gamma phosphate is transferred to the NDP beta phosphate via a ping-pong mechanism, using a phosphorylated active-site intermediate. In Shewanella amazonensis (strain ATCC BAA-1098 / SB2B), this protein is Nucleoside diphosphate kinase.